The sequence spans 585 residues: Glutamate decarboxylase 2 (585 aa).

A compositionally biased stretch (low complexity) spans Met-1–Glu-14. Positions Met-1–Gly-24 are disordered. Residues Ser-3, Ser-6, Ser-10, and Ser-13 each carry the phosphoserine modification. S-palmitoyl cysteine attachment occurs at residues Cys-30 and Cys-45. Gln-181 to Ser-183 serves as a coordination point for substrate. Position 396 is an N6-(pyridoxal phosphate)lysine (Lys-396). Residue Arg-558 coordinates substrate.

Belongs to the group II decarboxylase family. As to quaternary structure, homodimer. It depends on pyridoxal 5'-phosphate as a cofactor. In terms of processing, phosphorylated; which does not affect kinetic parameters or subcellular location. Palmitoylated; which is required for presynaptic clustering.

It is found in the cytoplasm. The protein localises to the cytosol. The protein resides in the cytoplasmic vesicle. It localises to the presynaptic cell membrane. Its subcellular location is the golgi apparatus membrane. It catalyses the reaction L-glutamate + H(+) = 4-aminobutanoate + CO2. Functionally, catalyzes the production of GABA. This chain is Glutamate decarboxylase 2, found in Homo sapiens (Human).